A 195-amino-acid chain; its full sequence is Probable GTP-binding protein EngB (195 aa).

One can recognise an EngB-type G domain in the interval D24–L195. GTP-binding positions include G32–S39, G59–L63, D77–G80, T144–D147, and F176–S178. Residues S39 and T61 each coordinate Mg(2+).

Belongs to the TRAFAC class TrmE-Era-EngA-EngB-Septin-like GTPase superfamily. EngB GTPase family. It depends on Mg(2+) as a cofactor.

Functionally, necessary for normal cell division and for the maintenance of normal septation. The protein is Probable GTP-binding protein EngB of Lactococcus lactis subsp. cremoris (strain MG1363).